The following is a 562-amino-acid chain: Glutamate--tRNA ligase (562 aa).

The 'HIGH' region motif lies at 101-111 (PEPNGYPHIGH).

This sequence belongs to the class-I aminoacyl-tRNA synthetase family. Glutamate--tRNA ligase type 2 subfamily.

It localises to the cytoplasm. It catalyses the reaction tRNA(Glu) + L-glutamate + ATP = L-glutamyl-tRNA(Glu) + AMP + diphosphate. Its function is as follows. Catalyzes the attachment of glutamate to tRNA(Glu) in a two-step reaction: glutamate is first activated by ATP to form Glu-AMP and then transferred to the acceptor end of tRNA(Glu). This Cenarchaeum symbiosum (strain A) protein is Glutamate--tRNA ligase.